A 325-amino-acid polypeptide reads, in one-letter code: N-acetyl-gamma-glutamyl-phosphate reductase (325 aa).

Cysteine 135 is a catalytic residue.

The protein belongs to the NAGSA dehydrogenase family. Type 1 subfamily.

Its subcellular location is the cytoplasm. It carries out the reaction N-acetyl-L-glutamate 5-semialdehyde + phosphate + NADP(+) = N-acetyl-L-glutamyl 5-phosphate + NADPH + H(+). The protein operates within amino-acid biosynthesis; L-arginine biosynthesis; N(2)-acetyl-L-ornithine from L-glutamate: step 3/4. Functionally, catalyzes the NADPH-dependent reduction of N-acetyl-5-glutamyl phosphate to yield N-acetyl-L-glutamate 5-semialdehyde. This chain is N-acetyl-gamma-glutamyl-phosphate reductase, found in Karelsulcia muelleri (strain GWSS) (Sulcia muelleri).